The primary structure comprises 764 residues: FAST kinase domain-containing protein 5, mitochondrial (764 aa).

S95 is modified (phosphoserine). K507 is subject to N6-acetyllysine. One can recognise an RAP domain in the interval 697–757 (LAIQFTNRNQ…RLEKLAFLHE (61 aa)).

The protein belongs to the FAST kinase family. As to quaternary structure, found in a complex with GRSF1, DDX28, DHX30 and FASTKD2. Associates with the 12S mitochondrial rRNA (12S mt-rRNA).

Its subcellular location is the mitochondrion matrix. It is found in the mitochondrion nucleoid. Functionally, plays an important role in the processing of non-canonical mitochondrial mRNA precursors. This is FAST kinase domain-containing protein 5, mitochondrial (FASTKD5) from Macaca fascicularis (Crab-eating macaque).